A 208-amino-acid polypeptide reads, in one-letter code: Holliday junction branch migration complex subunit RuvA (208 aa).

Residues 1 to 64 form a domain I region; sequence MIGKLKGIVD…EDMIRLYGFR (64 aa). The interval 65 to 143 is domain II; it reads VDAEREWFRL…AFAPIDPALI (79 aa). The flexible linker stretch occupies residues 144–152; the sequence is ALTGAVEDR. A domain III region spans residues 153–208; sequence TAPQPVADAISALVNLGYAQIQASAAIAAALKGLGEEAGTVEAKTLIRLGLRELAR.

It belongs to the RuvA family. As to quaternary structure, homotetramer. Forms an RuvA(8)-RuvB(12)-Holliday junction (HJ) complex. HJ DNA is sandwiched between 2 RuvA tetramers; dsDNA enters through RuvA and exits via RuvB. An RuvB hexamer assembles on each DNA strand where it exits the tetramer. Each RuvB hexamer is contacted by two RuvA subunits (via domain III) on 2 adjacent RuvB subunits; this complex drives branch migration. In the full resolvosome a probable DNA-RuvA(4)-RuvB(12)-RuvC(2) complex forms which resolves the HJ.

Its subcellular location is the cytoplasm. Functionally, the RuvA-RuvB-RuvC complex processes Holliday junction (HJ) DNA during genetic recombination and DNA repair, while the RuvA-RuvB complex plays an important role in the rescue of blocked DNA replication forks via replication fork reversal (RFR). RuvA specifically binds to HJ cruciform DNA, conferring on it an open structure. The RuvB hexamer acts as an ATP-dependent pump, pulling dsDNA into and through the RuvAB complex. HJ branch migration allows RuvC to scan DNA until it finds its consensus sequence, where it cleaves and resolves the cruciform DNA. The sequence is that of Holliday junction branch migration complex subunit RuvA from Methylorubrum extorquens (strain CM4 / NCIMB 13688) (Methylobacterium extorquens).